The primary structure comprises 272 residues: Phosphonates import ATP-binding protein PhnC (272 aa).

The 245-residue stretch at 2 to 246 (LELQRLTKTY…VLATIYGAED (245 aa)) folds into the ABC transporter domain. Residue 35–42 (GPSGAGKS) coordinates ATP. Positions 248–272 (ASSGREPAPEREPEDTERHLAEVGR) are disordered. A compositionally biased stretch (basic and acidic residues) spans 254-272 (PAPEREPEDTERHLAEVGR).

This sequence belongs to the ABC transporter superfamily. Phosphonates importer (TC 3.A.1.9.1) family. The complex is composed of two ATP-binding proteins (PhnC), two transmembrane proteins (PhnE) and a solute-binding protein (PhnD).

It is found in the cell inner membrane. It catalyses the reaction phosphonate(out) + ATP + H2O = phosphonate(in) + ADP + phosphate + H(+). Its function is as follows. Part of the ABC transporter complex PhnCDE involved in phosphonates import. Responsible for energy coupling to the transport system. This Chromohalobacter salexigens (strain ATCC BAA-138 / DSM 3043 / CIP 106854 / NCIMB 13768 / 1H11) protein is Phosphonates import ATP-binding protein PhnC.